A 393-amino-acid chain; its full sequence is Glycerol-3-phosphate dehydrogenase [NAD(+)] 1 (393 aa).

NAD(+)-binding positions include Gly-45–Gly-50, Phe-133, Lys-157, and Ala-190. Lys-157 is a binding site for substrate. Lys-250 (proton acceptor) is an active-site residue. NAD(+)-binding residues include Arg-316 and Gln-345. Arg-316 to Asn-317 is a binding site for substrate.

Belongs to the NAD-dependent glycerol-3-phosphate dehydrogenase family.

It catalyses the reaction sn-glycerol 3-phosphate + NAD(+) = dihydroxyacetone phosphate + NADH + H(+). The polypeptide is Glycerol-3-phosphate dehydrogenase [NAD(+)] 1 (gpd1) (Cyberlindnera jadinii (Torula yeast)).